A 163-amino-acid chain; its full sequence is Large ribosomal subunit protein uL10 (163 aa).

This sequence belongs to the universal ribosomal protein uL10 family. In terms of assembly, part of the ribosomal stalk of the 50S ribosomal subunit. The N-terminus interacts with L11 and the large rRNA to form the base of the stalk. The C-terminus forms an elongated spine to which L12 dimers bind in a sequential fashion forming a multimeric L10(L12)X complex.

In terms of biological role, forms part of the ribosomal stalk, playing a central role in the interaction of the ribosome with GTP-bound translation factors. In Mannheimia succiniciproducens (strain KCTC 0769BP / MBEL55E), this protein is Large ribosomal subunit protein uL10.